Consider the following 188-residue polypeptide: MKYLIIGLGNIGSEYHETRHNIGFMVLDDLAQEKGVTFDLKRHAHIAEVKVKGRTLILVKPTTYMNLSGKAVQYWMQEEKIALENILVITDDLALPFGTLRMRMKGSSGGHNGLSHIEQTLASANYTRLRMGVGSDFAKGQQVDYVLAPFSAEEQKEMPDVLKRAKDAVTGFATIGVERAMNAVNTKK.

TRNA is bound at residue Tyr15. The active-site Proton acceptor is His20. Residues Tyr64, Asn66, and Asn112 each coordinate tRNA.

This sequence belongs to the PTH family. As to quaternary structure, monomer.

Its subcellular location is the cytoplasm. It carries out the reaction an N-acyl-L-alpha-aminoacyl-tRNA + H2O = an N-acyl-L-amino acid + a tRNA + H(+). Hydrolyzes ribosome-free peptidyl-tRNAs (with 1 or more amino acids incorporated), which drop off the ribosome during protein synthesis, or as a result of ribosome stalling. In terms of biological role, catalyzes the release of premature peptidyl moieties from peptidyl-tRNA molecules trapped in stalled 50S ribosomal subunits, and thus maintains levels of free tRNAs and 50S ribosomes. The chain is Peptidyl-tRNA hydrolase from Cytophaga hutchinsonii (strain ATCC 33406 / DSM 1761 / CIP 103989 / NBRC 15051 / NCIMB 9469 / D465).